A 166-amino-acid chain; its full sequence is Cofilin-1 (166 aa).

Position 2 is an N-acetylalanine (Ala-2). Phosphoserine is present on residues Ser-3 and Ser-8. Positions 4 to 153 (GVAVSDGVIK…KDRCTLAEKL (150 aa)) constitute an ADF-H domain. The residue at position 13 (Lys-13) is an N6-acetyllysine. Thr-25 carries the post-translational modification Phosphothreonine. The short motif at 30-34 (KKRKK) is the Nuclear localization signal element. Position 41 is a phosphoserine (Ser-41). At Tyr-68 the chain carries Phosphotyrosine. Lys-73 bears the N6-acetyllysine mark. Residue Lys-132 forms a Glycyl lysine isopeptide (Lys-Gly) (interchain with G-Cter in SUMO2) linkage. Tyr-140 carries the phosphotyrosine modification. An N6-acetyllysine modification is found at Lys-144. At Ser-156 the chain carries Phosphoserine.

This sequence belongs to the actin-binding proteins ADF family. As to quaternary structure, can bind G- and F-actin in a 1:1 ratio of cofilin to actin. It is a major component of intranuclear and cytoplasmic actin rods. Interacts with the subcortical maternal complex (SCMC) via interaction with TLE6 and NLRP5. Interacts with C9orf72. Inactivated by phosphorylation on Ser-3. Phosphorylated on Ser-3 in resting cells. Dephosphorylated by PDXP/chronophin; this restores its activity in promoting actin filament depolymerization. The phosphorylation of Ser-24 may prevent recognition of the nuclear localization signal. Phosphorylated via a ARRB1-RAC1-LIMK1-PAK1 cascade upon active ligand stimulation of atypical chemokine receptor ACKR2.

The protein resides in the nucleus matrix. It is found in the cytoplasm. Its subcellular location is the cytoskeleton. The protein localises to the cell projection. It localises to the ruffle membrane. The protein resides in the lamellipodium membrane. It is found in the lamellipodium. Its subcellular location is the growth cone. The protein localises to the axon. Functionally, binds to F-actin and exhibits pH-sensitive F-actin depolymerizing activity. Important for normal progress through mitosis and normal cytokinesis. In conjunction with the subcortical maternal complex (SCMC), plays an essential role for zygotes to progress beyond the first embryonic cell divisions via regulation of actin dynamics. Required for the centralization of the mitotic spindle and symmetric division of zygotes. Plays a role in the regulation of cell morphology and cytoskeletal organization in epithelial cells. Required for the up-regulation of atypical chemokine receptor ACKR2 from endosomal compartment to cell membrane, increasing its efficiency in chemokine uptake and degradation. Required for neural tube morphogenesis and neural crest cell migration. The chain is Cofilin-1 (Cfl1) from Rattus norvegicus (Rat).